The sequence spans 591 residues: Aspartate--tRNA(Asp/Asn) ligase (591 aa).

Glutamate 170 lines the L-aspartate pocket. Residues 194 to 197 form an aspartate region; sequence QLFK. Residue arginine 216 coordinates L-aspartate. Residues 216-218 and glutamine 225 contribute to the ATP site; that span reads RDE. Histidine 448 provides a ligand contact to L-aspartate. Glutamate 482 provides a ligand contact to ATP. An L-aspartate-binding site is contributed by arginine 489. An ATP-binding site is contributed by 534-537; it reads GWDR. Residues 559–591 form a disordered region; it reads GGVDPLTDAPAPITEQQRKESGIDVKPEPSKPH. The span at 574-591 shows a compositional bias: basic and acidic residues; the sequence is QQRKESGIDVKPEPSKPH.

The protein belongs to the class-II aminoacyl-tRNA synthetase family. Type 1 subfamily. As to quaternary structure, homodimer.

It localises to the cytoplasm. The catalysed reaction is tRNA(Asx) + L-aspartate + ATP = L-aspartyl-tRNA(Asx) + AMP + diphosphate. Aspartyl-tRNA synthetase with relaxed tRNA specificity since it is able to aspartylate not only its cognate tRNA(Asp) but also tRNA(Asn). Reaction proceeds in two steps: L-aspartate is first activated by ATP to form Asp-AMP and then transferred to the acceptor end of tRNA(Asp/Asn). The sequence is that of Aspartate--tRNA(Asp/Asn) ligase from Mycolicibacterium paratuberculosis (strain ATCC BAA-968 / K-10) (Mycobacterium paratuberculosis).